Consider the following 876-residue polypeptide: Alanine--tRNA ligase (876 aa).

The Zn(2+) site is built by H565, H569, C667, and H671.

This sequence belongs to the class-II aminoacyl-tRNA synthetase family. Zn(2+) serves as cofactor.

It is found in the cytoplasm. It catalyses the reaction tRNA(Ala) + L-alanine + ATP = L-alanyl-tRNA(Ala) + AMP + diphosphate. Catalyzes the attachment of alanine to tRNA(Ala) in a two-step reaction: alanine is first activated by ATP to form Ala-AMP and then transferred to the acceptor end of tRNA(Ala). Also edits incorrectly charged Ser-tRNA(Ala) and Gly-tRNA(Ala) via its editing domain. The protein is Alanine--tRNA ligase of Staphylococcus saprophyticus subsp. saprophyticus (strain ATCC 15305 / DSM 20229 / NCIMB 8711 / NCTC 7292 / S-41).